The sequence spans 349 residues: DNA polymerase IV (349 aa).

One can recognise a UmuC domain in the interval 4–185 (IIHIDCDCFY…LPVAKLHGVG (182 aa)). Mg(2+) contacts are provided by aspartate 8 and aspartate 103. Glutamate 104 is a catalytic residue.

The protein belongs to the DNA polymerase type-Y family. Monomer. Mg(2+) serves as cofactor.

Its subcellular location is the cytoplasm. The enzyme catalyses DNA(n) + a 2'-deoxyribonucleoside 5'-triphosphate = DNA(n+1) + diphosphate. Its function is as follows. Poorly processive, error-prone DNA polymerase involved in untargeted mutagenesis. Copies undamaged DNA at stalled replication forks, which arise in vivo from mismatched or misaligned primer ends. These misaligned primers can be extended by PolIV. Exhibits no 3'-5' exonuclease (proofreading) activity. May be involved in translesional synthesis, in conjunction with the beta clamp from PolIII. This chain is DNA polymerase IV, found in Pseudomonas aeruginosa (strain UCBPP-PA14).